We begin with the raw amino-acid sequence, 415 residues long: Branched-chain-amino-acid aminotransferase 5, chloroplastic (415 aa).

Residues 1-65 (MERSAVASGF…IVSEVSRNRR (65 aa)) constitute a chloroplast transit peptide. Residue Lys-261 is modified to N6-(pyridoxal phosphate)lysine.

This sequence belongs to the class-IV pyridoxal-phosphate-dependent aminotransferase family. Requires pyridoxal 5'-phosphate as cofactor.

It localises to the plastid. It is found in the chloroplast. It catalyses the reaction L-leucine + 2-oxoglutarate = 4-methyl-2-oxopentanoate + L-glutamate. The catalysed reaction is L-isoleucine + 2-oxoglutarate = (S)-3-methyl-2-oxopentanoate + L-glutamate. It carries out the reaction L-valine + 2-oxoglutarate = 3-methyl-2-oxobutanoate + L-glutamate. It functions in the pathway amino-acid biosynthesis; L-isoleucine biosynthesis; L-isoleucine from 2-oxobutanoate: step 4/4. Its pathway is amino-acid biosynthesis; L-leucine biosynthesis; L-leucine from 3-methyl-2-oxobutanoate: step 4/4. It participates in amino-acid biosynthesis; L-valine biosynthesis; L-valine from pyruvate: step 4/4. Functionally, converts 2-oxo acids to branched-chain amino acids. Acts on leucine, isoleucine and valine. The polypeptide is Branched-chain-amino-acid aminotransferase 5, chloroplastic (BCAT5) (Arabidopsis thaliana (Mouse-ear cress)).